A 137-amino-acid polypeptide reads, in one-letter code: Large-conductance mechanosensitive channel (137 aa).

The next 2 membrane-spanning stretches (helical) occupy residues 16–36 (VIDL…VDSI) and 83–103 (GNFI…FLMI).

It belongs to the MscL family. As to quaternary structure, homopentamer.

It localises to the cell inner membrane. Its function is as follows. Channel that opens in response to stretch forces in the membrane lipid bilayer. May participate in the regulation of osmotic pressure changes within the cell. This is Large-conductance mechanosensitive channel from Methylibium petroleiphilum (strain ATCC BAA-1232 / LMG 22953 / PM1).